The sequence spans 189 residues: uncharacterized protein (189 aa).

Transmembrane regions (helical) follow at residues A4–R21, A34–L56, L79–S101, R122–N144, and I148–V170.

The protein localises to the cell membrane. This is an uncharacterized protein from Archaeoglobus fulgidus (strain ATCC 49558 / DSM 4304 / JCM 9628 / NBRC 100126 / VC-16).